The sequence spans 373 residues: MKKKEIKQLKNEIKIALLNSDVETLSHIGKEGHGFLMKSLRKSVWVSLCGLSCRHRMECLSRSTSQSSYADQNQVHLDSERSFFQYKLNPFLLRKHRSQLTKLLSVVFKHYPELCYYQGLHDIAQILLLTLPFSHALPLMEHLVFYRLRDFMLPTLDGTVKQLQLILAVIKARDPTLYEYLIKADIQCYFALSWLITWFAHDVSDISVVCRLFDFFISSHPLTVVYTCAQVVLDNRTSIIELLWDNSGADLLHSYLCKLPASINVNQLIKNTCATISAVPFSSLPLDRYQISPYSCLRNTGDPWEYMSRSNGLLLFRLQLAELQEEKHKPGTKVPAVFLQENIFNGCNMLAAITVIGIGIVASQLIPKSTSNS.

The region spanning 35-220 is the Rab-GAP TBC domain; sequence FLMKSLRKSV…RLFDFFISSH (186 aa). A helical membrane pass occupies residues 343–363; it reads IFNGCNMLAAITVIGIGIVAS.

It localises to the endoplasmic reticulum membrane. Has a role in vesicular trafficking and septation during cytokinesis. This Schizosaccharomyces pombe (strain 972 / ATCC 24843) (Fission yeast) protein is GTPase-activating protein gyp10 (gyp10).